Consider the following 513-residue polypeptide: Histidine ammonia-lyase (513 aa).

Residues 143-145 constitute a cross-link (5-imidazolinone (Ala-Gly)); sequence ASG. At serine 144 the chain carries 2,3-didehydroalanine (Ser).

It belongs to the PAL/histidase family. Post-translationally, contains an active site 4-methylidene-imidazol-5-one (MIO), which is formed autocatalytically by cyclization and dehydration of residues Ala-Ser-Gly.

The protein resides in the cytoplasm. It carries out the reaction L-histidine = trans-urocanate + NH4(+). The protein operates within amino-acid degradation; L-histidine degradation into L-glutamate; N-formimidoyl-L-glutamate from L-histidine: step 1/3. The protein is Histidine ammonia-lyase of Xanthomonas axonopodis pv. citri (strain 306).